The chain runs to 151 residues: Small ribosomal subunit protein uS15 (151 aa).

A Phosphoserine modification is found at serine 32. Residues lysine 39 and lysine 43 each participate in a glycyl lysine isopeptide (Lys-Gly) (interchain with G-Cter in ubiquitin) cross-link.

This sequence belongs to the universal ribosomal protein uS15 family. Component of the small ribosomal subunit (SSU). Mature yeast ribosomes consist of a small (40S) and a large (60S) subunit. The 40S small subunit contains 1 molecule of ribosomal RNA (18S rRNA) and 33 different proteins (encoded by 57 genes). The large 60S subunit contains 3 rRNA molecules (25S, 5.8S and 5S rRNA) and 46 different proteins (encoded by 81 genes).

Its subcellular location is the cytoplasm. Functionally, component of the ribosome, a large ribonucleoprotein complex responsible for the synthesis of proteins in the cell. The small ribosomal subunit (SSU) binds messenger RNAs (mRNAs) and translates the encoded message by selecting cognate aminoacyl-transfer RNA (tRNA) molecules. The large subunit (LSU) contains the ribosomal catalytic site termed the peptidyl transferase center (PTC), which catalyzes the formation of peptide bonds, thereby polymerizing the amino acids delivered by tRNAs into a polypeptide chain. The nascent polypeptides leave the ribosome through a tunnel in the LSU and interact with protein factors that function in enzymatic processing, targeting, and the membrane insertion of nascent chains at the exit of the ribosomal tunnel. This is Small ribosomal subunit protein uS15 from Saccharomyces cerevisiae (strain ATCC 204508 / S288c) (Baker's yeast).